The chain runs to 627 residues: Phosphomethylpyrimidine synthase (627 aa).

Substrate contacts are provided by residues Asn-233, Met-262, Tyr-291, His-327, 347-349, 388-391, and Glu-427; these read SRG and DGLR. His-431 contacts Zn(2+). Tyr-454 serves as a coordination point for substrate. His-495 is a binding site for Zn(2+). Cys-575, Cys-578, and Cys-583 together coordinate [4Fe-4S] cluster.

It belongs to the ThiC family. Homodimer. The cofactor is [4Fe-4S] cluster.

The catalysed reaction is 5-amino-1-(5-phospho-beta-D-ribosyl)imidazole + S-adenosyl-L-methionine = 4-amino-2-methyl-5-(phosphooxymethyl)pyrimidine + CO + 5'-deoxyadenosine + formate + L-methionine + 3 H(+). Its pathway is cofactor biosynthesis; thiamine diphosphate biosynthesis. In terms of biological role, catalyzes the synthesis of the hydroxymethylpyrimidine phosphate (HMP-P) moiety of thiamine from aminoimidazole ribotide (AIR) in a radical S-adenosyl-L-methionine (SAM)-dependent reaction. This Acidithiobacillus ferrooxidans (strain ATCC 23270 / DSM 14882 / CIP 104768 / NCIMB 8455) (Ferrobacillus ferrooxidans (strain ATCC 23270)) protein is Phosphomethylpyrimidine synthase.